The chain runs to 316 residues: D-alanine--D-alanine ligase (316 aa).

Residues 104 to 303 (KRVWLQHGLP…YADLCVAILA (200 aa)) form the ATP-grasp domain. 130-185 (PDRLGLPLILKPPHEGSTVGITKVAGYSDMKAAYELAARFDAEVLAEQFITGRELT) contributes to the ATP binding site. Mg(2+) is bound by residues aspartate 257, glutamate 270, and asparagine 272.

It belongs to the D-alanine--D-alanine ligase family. Mg(2+) is required as a cofactor. Mn(2+) serves as cofactor.

It localises to the cytoplasm. It catalyses the reaction 2 D-alanine + ATP = D-alanyl-D-alanine + ADP + phosphate + H(+). It functions in the pathway cell wall biogenesis; peptidoglycan biosynthesis. Cell wall formation. In Bordetella bronchiseptica (strain ATCC BAA-588 / NCTC 13252 / RB50) (Alcaligenes bronchisepticus), this protein is D-alanine--D-alanine ligase.